We begin with the raw amino-acid sequence, 197 residues long: uncharacterized protein (197 aa).

Positions 168–185 (QRDDFSEDSHANDPKLVG) are enriched in basic and acidic residues. Positions 168–197 (QRDDFSEDSHANDPKLVGDDYVPQAPEQIN) are disordered.

This is an uncharacterized protein from Escherichia coli (strain K12).